The primary structure comprises 373 residues: 4-hydroxy-3-methylbut-2-en-1-yl diphosphate synthase (flavodoxin) (373 aa).

Residues Cys-269, Cys-272, Cys-304, and Glu-311 each contribute to the [4Fe-4S] cluster site.

The protein belongs to the IspG family. [4Fe-4S] cluster serves as cofactor.

It catalyses the reaction (2E)-4-hydroxy-3-methylbut-2-enyl diphosphate + oxidized [flavodoxin] + H2O + 2 H(+) = 2-C-methyl-D-erythritol 2,4-cyclic diphosphate + reduced [flavodoxin]. The protein operates within isoprenoid biosynthesis; isopentenyl diphosphate biosynthesis via DXP pathway; isopentenyl diphosphate from 1-deoxy-D-xylulose 5-phosphate: step 5/6. Converts 2C-methyl-D-erythritol 2,4-cyclodiphosphate (ME-2,4cPP) into 1-hydroxy-2-methyl-2-(E)-butenyl 4-diphosphate. This chain is 4-hydroxy-3-methylbut-2-en-1-yl diphosphate synthase (flavodoxin), found in Baumannia cicadellinicola subsp. Homalodisca coagulata.